Consider the following 211-residue polypeptide: MIGIIDYGRGNLRSVEKALWKLGYPAKVLESPAELMAVKGIILPGVGAFADAMAALEEKGWIQPLIHYAHSGKPFLGICLGMQVLFEVGEEHGEHKGLGLLPGRVVRFPAGRKIPHMGWNTLHQEKPCRLLEGIPDEAYFYFVHSYYVASEEQEILAGMSDYGVPFPALVGRDNVWGAQFHPEKSSPWGLKLLENFGKWVNEDATVSSHRS.

The region spanning 1 to 206 (MIGIIDYGRG…GKWVNEDATV (206 aa)) is the Glutamine amidotransferase type-1 domain. Cys79 acts as the Nucleophile in catalysis. Active-site residues include His181 and Glu183.

As to quaternary structure, heterodimer of HisH and HisF.

The protein localises to the cytoplasm. It catalyses the reaction 5-[(5-phospho-1-deoxy-D-ribulos-1-ylimino)methylamino]-1-(5-phospho-beta-D-ribosyl)imidazole-4-carboxamide + L-glutamine = D-erythro-1-(imidazol-4-yl)glycerol 3-phosphate + 5-amino-1-(5-phospho-beta-D-ribosyl)imidazole-4-carboxamide + L-glutamate + H(+). It carries out the reaction L-glutamine + H2O = L-glutamate + NH4(+). It functions in the pathway amino-acid biosynthesis; L-histidine biosynthesis; L-histidine from 5-phospho-alpha-D-ribose 1-diphosphate: step 5/9. IGPS catalyzes the conversion of PRFAR and glutamine to IGP, AICAR and glutamate. The HisH subunit catalyzes the hydrolysis of glutamine to glutamate and ammonia as part of the synthesis of IGP and AICAR. The resulting ammonia molecule is channeled to the active site of HisF. The protein is Imidazole glycerol phosphate synthase subunit HisH of Desulfitobacterium hafniense (strain DSM 10664 / DCB-2).